Here is a 1040-residue protein sequence, read N- to C-terminus: Multidrug resistance protein MdtB (1040 aa).

12 helical membrane-spanning segments follow: residues 16 to 36 (FIMRPVATTLLMVAILLAGII), 347 to 367 (LMMAIALVVMIIYLFLRNIPA), 369 to 389 (IIPGVAVPLSLIGTFAVMVFL), 396 to 416 (LTLMALTIATGFVVDDAIVVI), 440 to 460 (IGFTIISLTFSLIAVLIPLLF), 472 to 492 (FAITLAVAILISAVVSLTLTP), 537 to 557 (WLTLSVALSTLLLSVLLWVFI), 863 to 883 (LGSTVWLIVAAVVAMYIVLGI), 888 to 908 (FIHPITILSTLPTAGVGALLA), 911 to 931 (IAGSELDVIAIIGIILLIGIV), 968 to 988 (ILMTTLAALLGALPLMLSTGV), and 998 to 1018 (IGMVGGLIVSQVLTLFTTPVI).

The protein belongs to the resistance-nodulation-cell division (RND) (TC 2.A.6) family. MdtB subfamily. In terms of assembly, part of a tripartite efflux system composed of MdtA, MdtB and MdtC. MdtB forms a heteromultimer with MdtC.

The protein resides in the cell inner membrane. The MdtABC tripartite complex confers resistance against novobiocin and deoxycholate. The polypeptide is Multidrug resistance protein MdtB (Escherichia coli O9:H4 (strain HS)).